Consider the following 159-residue polypeptide: MNKHKTDYAGYACCVICGLIVGIIFTATLLKVVERKLVHTPSIDKTIKDAYIREDCPTDWISYNNKCIHLSTDRKTWEEGRNACKALNPNSDLIKIETPNELSFLRSIRRGYWVGESEILNQTTPYNFIAKNATKNGTKKRKYICSTTNTPKLHSCYTI.

Over methionine 1 to alanine 9 the chain is Cytoplasmic. The helical; Signal-anchor for type II membrane protein transmembrane segment at glycine 10–leucine 30 threads the bilayer. The Extracellular portion of the chain corresponds to lysine 31–isoleucine 159. Residues tyrosine 63–isoleucine 159 enclose the C-type lectin domain.

The protein belongs to the poxviridae A40 protein family.

The protein localises to the host membrane. The polypeptide is Protein A40 (Bos taurus (Bovine)).